We begin with the raw amino-acid sequence, 537 residues long: DELLA protein GAI (537 aa).

Residues 1–33 are disordered; that stretch reads MKRDHQEISGSGSNPAESSSIKGKLWEEDPDAG. Low complexity predominate over residues 9–20; the sequence is SGSGSNPAESSS. Residues 37-41 carry the DELLA motif motif; it reads DELLA. Residues 131-157 form a disordered region; it reads KSDPGLEITRKRAKTESSSSSSSTTTR. Low complexity predominate over residues 147 to 156; it reads SSSSSSSTTT. In terms of domain architecture, GRAS spans 162 to 533; it reads IDSQEAGVRL…RPLIAHLGLA (372 aa). Residues 169–223 are leucine repeat I (LRI); that stretch reads VRLVHTLMACAEAVQQDNLKLADALVKHIGLLASSQTGAMRKVATYFAEALARRI. Residues 241–306 are VHIID; that stretch reads QIPFYETCPY…GGPPAFRLTG (66 aa). The short motif at 272-276 is the VHIID element; that stretch reads VHVID. Residues 320 to 352 form a leucine repeat II (LRII) region; that stretch reads QVGWKLAQLAERIGIEFEFRGFVANSLADLEPE. A PFYRE region spans residues 364–454; the sequence is VAVNAVFELH…ELYLGRQICN (91 aa). Residues 372–376 carry the LXXLL motif motif; that stretch reads LHPLL. The SAW stretch occupies residues 457–533; it reads ACEGMDRVER…RPLIAHLGLA (77 aa).

Belongs to the GRAS family. DELLA subfamily. In terms of processing, phosphorylated. Ubiquitinated. Upon GA application it is ubiquitinated, leading to its subsequent degradation.

Its subcellular location is the nucleus. In terms of biological role, probable transcriptional regulator that acts as a repressor of the gibberellin (GA) signaling pathway. Probably acts by participating in large multiprotein complexes that represses transcription of GA-inducible genes. Upon GA application, it is degraded by the proteasome, allowing the GA signaling pathway. The chain is DELLA protein GAI (GAI) from Gossypium hirsutum (Upland cotton).